Here is a 164-residue protein sequence, read N- to C-terminus: NADH-quinone oxidoreductase subunit I (164 aa).

4Fe-4S ferredoxin-type domains lie at 55–84 (RRYEGGEERCVACKLCEAICPAQAIYIEID) and 95–124 (KVYDIDLFKCIYCGLCEEACPVEAIVMGPY). [4Fe-4S] cluster-binding residues include cysteine 64, cysteine 67, cysteine 70, cysteine 74, cysteine 104, cysteine 107, cysteine 110, and cysteine 114.

It belongs to the complex I 23 kDa subunit family. NDH-1 is composed of 14 different subunits. Subunits NuoA, H, J, K, L, M, N constitute the membrane sector of the complex. It depends on [4Fe-4S] cluster as a cofactor.

The protein resides in the cell inner membrane. It catalyses the reaction a quinone + NADH + 5 H(+)(in) = a quinol + NAD(+) + 4 H(+)(out). In terms of biological role, NDH-1 shuttles electrons from NADH, via FMN and iron-sulfur (Fe-S) centers, to quinones in the respiratory chain. The immediate electron acceptor for the enzyme in this species is believed to be ubiquinone. Couples the redox reaction to proton translocation (for every two electrons transferred, four hydrogen ions are translocated across the cytoplasmic membrane), and thus conserves the redox energy in a proton gradient. The sequence is that of NADH-quinone oxidoreductase subunit I from Magnetococcus marinus (strain ATCC BAA-1437 / JCM 17883 / MC-1).